We begin with the raw amino-acid sequence, 285 residues long: Taffazin (285 aa).

Residues 1 to 23 lie on the Mitochondrial intermembrane side of the membrane; that stretch reads MDSNNSNNNNKNLKQICDIPKPQ. The stretch at 24-42 is an intramembrane region; the sequence is FLSKGVFTLVGVLCKFWIS. Topologically, residues 43–285 are mitochondrial intermembrane; it reads MNTVTTSGID…GRFSHPTIKD (243 aa). The HXXXXD motif signature appears at 74-79; the sequence is HSSNLD.

This sequence belongs to the taffazin family.

It is found in the mitochondrion outer membrane. It localises to the mitochondrion inner membrane. It catalyses the reaction a 1-acyl-sn-glycero-3-phosphate + a 1,2-diacyl-sn-glycero-3-phospho-(1'-sn-glycerol) = 1-acyl-sn-glycero-3-phospho-(1'-sn-glycerol) + a 1,2-diacyl-sn-glycero-3-phosphate. It carries out the reaction 1-hexadecanoyl-2-(9Z,12Z-octadecadienoyl)-sn-glycero-3-phospho-(1'-sn-glycerol) + 1-(9Z-octadecenoyl)-sn-glycero-3-phosphate = 1-(9Z)-octadecenoyl-2-(9Z,12Z)-octadecadienoyl-sn-glycero-3-phosphate + 1-hexadecanoyl-sn-glycero-3-phospho-(1'-sn-glycerol). The enzyme catalyses 1'-[1,2-diacyl-sn-glycero-3-phospho],3'-[1-acyl-sn-glycero-3-phospho]-glycerol + a 1,2-diacyl-sn-glycero-3-phosphocholine = a cardiolipin + a 1-acyl-sn-glycero-3-phosphocholine. The catalysed reaction is 1-hexadecanoyl-2-(9Z,12Z-octadecadienoyl)-sn-glycero-3-phosphocholine + 1-hexadecanoyl-sn-glycero-3-phosphocholine = 2-(9Z,12Z-octadecadienoyl)-sn-glycero-3-phosphocholine + 1,2-dihexadecanoyl-sn-glycero-3-phosphocholine. It catalyses the reaction 1,2-di-(9Z-octadecenoyl)-sn-glycero-3-phosphocholine + 1-hexadecanoyl-sn-glycero-3-phosphocholine = 1-hexadecanoyl-2-(9Z-octadecenoyl)-sn-glycero-3-phosphocholine + 1-(9Z-octadecenoyl)-sn-glycero-3-phosphocholine. The protein operates within phospholipid metabolism. In terms of biological role, acyltransferase required to remodel newly synthesized phospholipid cardiolipin (1',3'-bis-[1,2-diacyl-sn-glycero-3-phospho]-glycerol or CL), a key component of the mitochondrial inner membrane, with tissue specific acyl chains necessary for adequate mitochondrial function. Its role in cellular physiology is to improve mitochondrial performance. CL is critical for the coassembly of lipids and proteins in mitochondrial membranes, for instance, remodeling of the acyl groups of CL in the mitochondrial inner membrane affects the assembly and stability of respiratory chain complex IV and its supercomplex forms. Catalyzes the transacylation between phospholipids and lysophospholipids, with the highest rate being between phosphatidylcholine (1,2-diacyl-sn-glycero-3-phosphocholine or PC) and CL. Catalyzes both 1-acyl-sn-glycero-3-phosphocholine (lysophosphatidylcholine or LPC) reacylation and PC-CL transacylation, that means, it exchanges acyl groups between CL and PC by a combination of forward and reverse transacylations. Also catalyzes transacylations between other phospholipids such as phosphatidylethanolamine (1,2-diacyl-sn-glycero-3-phosphoethanolamine or PE) and CL, between PC and PE, and between PC and phosphatidate (1,2-diacyl-sn-glycero-3-phosphate or PA), although at lower rate. Not regiospecific, it transfers acyl groups into any of the sn-1 and sn-2 positions of the monolysocardiolipin (MLCL), which is an important prerequisite for uniformity and symmetry in CL acyl distribution. Cannot transacylate dilysocardiolipin (DLCL), thus, the role of MLCL is limited to that of an acyl acceptor. CoA-independent, it can reshuffle molecular species within a single phospholipid class. Redistributes fatty acids between MLCL, CL, and other lipids, which prolongs the half-life of CL. Its action is completely reversible, which allows for cyclic changes, such as fission and fusion or bending and flattening of the membrane. Hence, by contributing to the flexibility of the lipid composition, it plays an important role in the dynamics of mitochondria membranes. This chain is Taffazin (taz), found in Dictyostelium discoideum (Social amoeba).